Here is a 404-residue protein sequence, read N- to C-terminus: Proteasomal ubiquitin receptor ADRM1-A (404 aa).

Residues 17–130 (SSSKYLVEFR…RKLNEYLNNP (114 aa)) enclose the Pru domain. A compositionally biased stretch (low complexity) spans 195–247 (GSGGPTTSSSSSSSRSQSAAVTPSSTTSSTRTTSAPVAPAAAPATTPSPAVSS). Disordered regions lie at residues 195-258 (GSGG…TSPT) and 376-404 (FAKA…MSLD). The segment covering 248-258 (NDGASEATSPT) has biased composition (polar residues). The DEUBAD domain occupies 278–390 (TGEGGQQVDL…QSTSSQKERE (113 aa)). Positions 386–395 (QKERESSEKK) are enriched in basic and acidic residues.

Belongs to the ADRM1 family. As to quaternary structure, component of the 19S proteasome regulatory particle complex. The 26S proteasome consists of a 20S core particle (CP) and two 19S regulatory subunits (RP).

It localises to the cytoplasm. Its subcellular location is the nucleus. Functionally, component of the 26S proteasome, a multiprotein complex involved in the ATP-dependent degradation of ubiquitinated proteins. This complex plays a key role in the maintenance of protein homeostasis by removing misfolded or damaged proteins, which could impair cellular functions, and by removing proteins whose functions are no longer required. Therefore, the proteasome participates in numerous cellular processes, including cell cycle progression, apoptosis, or DNA damage repair. Within the complex, functions as a proteasomal ubiquitin receptor. The protein is Proteasomal ubiquitin receptor ADRM1-A (adrm1-a) of Xenopus laevis (African clawed frog).